The following is a 140-amino-acid chain: Nucleoside diphosphate kinase (140 aa).

K11, F59, R87, T93, R104, and N114 together coordinate ATP. H117 serves as the catalytic Pros-phosphohistidine intermediate.

The protein belongs to the NDK family. In terms of assembly, homotetramer. Mg(2+) is required as a cofactor.

The protein resides in the cytoplasm. It catalyses the reaction a 2'-deoxyribonucleoside 5'-diphosphate + ATP = a 2'-deoxyribonucleoside 5'-triphosphate + ADP. The enzyme catalyses a ribonucleoside 5'-diphosphate + ATP = a ribonucleoside 5'-triphosphate + ADP. In terms of biological role, major role in the synthesis of nucleoside triphosphates other than ATP. The ATP gamma phosphate is transferred to the NDP beta phosphate via a ping-pong mechanism, using a phosphorylated active-site intermediate. The polypeptide is Nucleoside diphosphate kinase (Brucella anthropi (strain ATCC 49188 / DSM 6882 / CCUG 24695 / JCM 21032 / LMG 3331 / NBRC 15819 / NCTC 12168 / Alc 37) (Ochrobactrum anthropi)).